Reading from the N-terminus, the 557-residue chain is Organic cation/carnitine transporter 2 (557 aa).

At Met-1–Leu-20 the chain is on the cytoplasmic side. The chain crosses the membrane as a helical span at residues Ile-21–Phe-41. Residues Leu-42–Ala-142 lie on the Extracellular side of the membrane. N-linked (GlcNAc...) asparagine glycosylation is found at Asn-57, Asn-64, and Asn-91. The chain crosses the membrane as a helical span at residues Pro-143–Leu-163. Residues Ser-164–Val-172 are Cytoplasmic-facing. Residues Leu-173 to Phe-193 traverse the membrane as a helical segment. Topologically, residues Glu-194–Thr-197 are extracellular. A helical membrane pass occupies residues Val-198–Gly-218. Gly-218 to Ser-225 provides a ligand contact to ATP. Residues Thr-219–Thr-232 are Cytoplasmic-facing. Residues Leu-233 to Ile-253 traverse the membrane as a helical segment. Over Arg-254 to Arg-257 the chain is Extracellular. Residues Met-258–Pro-278 form a helical membrane-spanning segment. At Glu-279 to Arg-341 the chain is on the cytoplasmic side. Residues Ile-342–Ser-362 form a helical membrane-spanning segment. Residues Leu-363–Tyr-373 lie on the Extracellular side of the membrane. A helical membrane pass occupies residues Val-374–Leu-394. Residues Gln-395–Ala-406 lie on the Cytoplasmic side of the membrane. A helical transmembrane segment spans residues Leu-407–Leu-427. Topologically, residues Ser-428–Ala-430 are extracellular. A helical membrane pass occupies residues Leu-431 to Ala-451. At Glu-452 to Gly-462 the chain is on the cytoplasmic side. The helical transmembrane segment at Val-463–Leu-483 threads the bilayer. Residues Gly-484 to Arg-488 are Extracellular-facing. Phosphotyrosine is present on Tyr-486. The chain crosses the membrane as a helical span at residues Phe-489–Phe-509. The Cytoplasmic segment spans residues Pro-510 to Phe-557. Residues Ser-537–Phe-557 are disordered. Ser-548 carries the phosphoserine modification. Thr-550 is subject to Phosphothreonine.

This sequence belongs to the major facilitator (TC 2.A.1) superfamily. Organic cation transporter (TC 2.A.1.19) family. As to quaternary structure, interacts with PDZK1. As to expression, expressed in the proximal and distal tubules and in the glomeruli in the kidney, in the myocardium, valves, and arterioles in the heart, in the labyrinthine layer of the placenta, and in the cortex, hippocampus, and cerebellum in the brain. Expressed in Sertoli cells in testis.

Its subcellular location is the cell membrane. The protein resides in the apical cell membrane. The protein localises to the basal cell membrane. It carries out the reaction (R)-carnitine(out) + Na(+)(out) = (R)-carnitine(in) + Na(+)(in). The enzyme catalyses O-acetyl-(R)-carnitine(out) + Na(+)(out) = O-acetyl-(R)-carnitine(in) + Na(+)(in). The catalysed reaction is O-propanoyl-(R)-carnitine(out) + Na(+)(out) = O-propanoyl-(R)-carnitine(in) + Na(+)(in). It catalyses the reaction glycine betaine(out) + Na(+)(out) = glycine betaine(in) + Na(+)(in). It carries out the reaction glycine betaine(out) + (R)-carnitine(in) = glycine betaine(in) + (R)-carnitine(out). The enzyme catalyses O-butanoyl-(R)-carnitine(out) + Na(+)(out) = O-butanoyl-(R)-carnitine(in) + Na(+)(in). The catalysed reaction is (S)-carnitine(out) + Na(+)(out) = (S)-carnitine(in) + Na(+)(in). It catalyses the reaction an O-acyl-(R)-carnitine(out) + Na(+)(out) = an O-acyl-(R)-carnitine(in) + Na(+)(in). It carries out the reaction L-glutamyl-L-arginyl-glycyl-L-methionyl-L-threonine(out) + Na(+)(out) = L-glutamyl-L-arginyl-glycyl-L-methionyl-L-threonine(in) + Na(+)(in). The enzyme catalyses N,N-dimethylglycine(out) + Na(+)(out) = N,N-dimethylglycine(in) + Na(+)(in). Its activity is regulated as follows. Inhibited by emetine, quinidine and verapamil. The IC(50) of emetine is 4.2 uM. Not inhibited by valproic acid. Transport of (R)-carnitine is stimulated by cholesterol in the plasma membrane. Functionally, sodium-ion dependent, high affinity carnitine transporter. Involved in the active cellular uptake of carnitine. Transports one sodium ion with one molecule of carnitine. Also transports organic cations such as tetraethylammonium (TEA) without the involvement of sodium. Also relative uptake activity ratio of carnitine to TEA is 11.3. May also contribute to regulate the transport of organic compounds in testis across the blood-testis-barrier. The sequence is that of Organic cation/carnitine transporter 2 (Slc22a5) from Rattus norvegicus (Rat).